The following is a 391-amino-acid chain: Nuclear hormone receptor family member nhr-115 (391 aa).

Residues 5 to 77 (LFPCQICGQN…IGMDASKFQY (73 aa)) constitute a DNA-binding region (nuclear receptor). The NR C4-type zinc-finger motif lies at 8–28 (CQICGQNSHGTHFGIVSCRAC). The NR C4-type; atypical zinc finger occupies 41–65 (ARKGCLTNFKDKGSCFCKPCRLRKC). An NR LBD domain is found at 130–388 (YLDHGCETPI…FSHPEMFDDS (259 aa)).

This sequence belongs to the nuclear hormone receptor family.

It localises to the nucleus. Its function is as follows. Orphan nuclear receptor. This is Nuclear hormone receptor family member nhr-115 (nhr-115) from Caenorhabditis elegans.